Consider the following 421-residue polypeptide: Calreticulin (421 aa).

The N-terminal stretch at 1–22 (MAFRVPNSSLLSLILLSLLAIA) is a signal peptide. An N-linked (GlcNAc...) asparagine glycan is attached at asparagine 56. The cysteines at positions 110 and 142 are disulfide-linked. 4 residues coordinate an alpha-D-glucoside: tyrosine 114, lysine 116, tyrosine 133, and aspartate 140. Asparagine 156 is a glycosylation site (N-linked (GlcNAc...) asparagine). 7 repeat units span residues 196 to 207 (KQTGSLYSDWDL), 215 to 226 (DPEAKKPEDWED), 232 to 243 (DPEDKKPEGYDD), 250 to 261 (DPDAKKPEDWDD), 265 to 275 (GEWTAPTIPNP), 279 to 289 (GEWKPKKIKNP), and 293 to 303 (GKWKAPLIDNP). The interval 196–261 (KQTGSLYSDW…DAKKPEDWDD (66 aa)) is 4 X approximate repeats. The segment at 217–283 (EAKKPEDWED…NPEYKGEWKP (67 aa)) is disordered. The span at 223-232 (DWEDQEYIPD) shows a compositional bias: acidic residues. Basic and acidic residues predominate over residues 233–257 (PEDKKPEGYDDIPKEITDPDAKKPE). The interval 265-303 (GEWTAPTIPNPEYKGEWKPKKIKNPNFKGKWKAPLIDNP) is 3 X approximate repeats. Residue glutamate 323 coordinates an alpha-D-glucoside. Over residues 350 to 380 (EETWGKQKDAEKAAFEELEKKLQEEESKEDP) the composition is skewed to basic and acidic residues. The tract at residues 350-421 (EETWGKQKDA…ETEAEKHDEL (72 aa)) is disordered. Acidic residues predominate over residues 381–399 (VDSDAEDDDNEAEDGEESD). Positions 418 to 421 (HDEL) match the Prevents secretion from ER motif.

It belongs to the calreticulin family.

The protein resides in the endoplasmic reticulum lumen. Molecular calcium-binding chaperone promoting folding, oligomeric assembly and quality control in the ER via the calreticulin/calnexin cycle. This lectin may interact transiently with almost all of the monoglucosylated glycoproteins that are synthesized in the ER. In Prunus armeniaca (Apricot), this protein is Calreticulin.